Here is a 157-residue protein sequence, read N- to C-terminus: ATP synthase subunit b (157 aa).

The chain crosses the membrane as a helical span at residues 11 to 31 (LIMFAMFTWFCMKFIWPPIVM).

Belongs to the ATPase B chain family. In terms of assembly, F-type ATPases have 2 components, F(1) - the catalytic core - and F(0) - the membrane proton channel. F(1) has five subunits: alpha(3), beta(3), gamma(1), delta(1), epsilon(1). F(0) has three main subunits: a(1), b(2) and c(10-14). The alpha and beta chains form an alternating ring which encloses part of the gamma chain. F(1) is attached to F(0) by a central stalk formed by the gamma and epsilon chains, while a peripheral stalk is formed by the delta and b chains.

The protein resides in the cell inner membrane. Functionally, f(1)F(0) ATP synthase produces ATP from ADP in the presence of a proton or sodium gradient. F-type ATPases consist of two structural domains, F(1) containing the extramembraneous catalytic core and F(0) containing the membrane proton channel, linked together by a central stalk and a peripheral stalk. During catalysis, ATP synthesis in the catalytic domain of F(1) is coupled via a rotary mechanism of the central stalk subunits to proton translocation. Its function is as follows. Component of the F(0) channel, it forms part of the peripheral stalk, linking F(1) to F(0). This Vesicomyosocius okutanii subsp. Calyptogena okutanii (strain HA) protein is ATP synthase subunit b.